Here is a 588-residue protein sequence, read N- to C-terminus: NADP-dependent malic enzyme 3 (588 aa).

At G2 the chain carries N-acetylglycine. Y136 serves as the catalytic Proton donor. R189 provides a ligand contact to NADP(+). The active-site Proton acceptor is K207. Residues E279, D280, and D303 each contribute to the a divalent metal cation site. Residues D303, 332–348 (LFLG…ELIA), and N444 contribute to the NADP(+) site.

Belongs to the malic enzymes family. As to quaternary structure, homohexamers and homooctamers. Mg(2+) is required as a cofactor. Requires Mn(2+) as cofactor. Mostly expressed in flowers, and, to a lower extent, in stems. In leaves and stems, restricted to the trichomes and trichome basal cells. Also present in the stipules flanking the base of the inflorescence bract leaves and in the meristematic zone of developing lateral roots. In flowers, present in pollen and the abscission zone of developing siliques.

The protein resides in the cytoplasm. It catalyses the reaction (S)-malate + NADP(+) = pyruvate + CO2 + NADPH. The enzyme catalyses oxaloacetate + H(+) = pyruvate + CO2. Slightly activated by succinate and aspartate. Repressed by fumarate, malate, oxaloacetate and glucose. The protein is NADP-dependent malic enzyme 3 (NADP-ME3) of Arabidopsis thaliana (Mouse-ear cress).